Reading from the N-terminus, the 355-residue chain is S-adenosylmethionine:tRNA ribosyltransferase-isomerase (355 aa).

Belongs to the QueA family. Monomer.

It is found in the cytoplasm. It catalyses the reaction 7-aminomethyl-7-carbaguanosine(34) in tRNA + S-adenosyl-L-methionine = epoxyqueuosine(34) in tRNA + adenine + L-methionine + 2 H(+). It participates in tRNA modification; tRNA-queuosine biosynthesis. Functionally, transfers and isomerizes the ribose moiety from AdoMet to the 7-aminomethyl group of 7-deazaguanine (preQ1-tRNA) to give epoxyqueuosine (oQ-tRNA). The protein is S-adenosylmethionine:tRNA ribosyltransferase-isomerase of Burkholderia cenocepacia (strain ATCC BAA-245 / DSM 16553 / LMG 16656 / NCTC 13227 / J2315 / CF5610) (Burkholderia cepacia (strain J2315)).